A 527-amino-acid polypeptide reads, in one-letter code: Pyruvate kinase 2, cytosolic (527 aa).

Arg58 is a binding site for substrate. K(+) contacts are provided by Asp60, Ser62, Asp92, and Thr93. 60–63 contributes to the ATP binding site; that stretch reads DFSW. Residue Lys256 coordinates substrate. Residue Glu258 participates in Mg(2+) binding. Residues Gly281, Asn282, and Thr313 each contribute to the substrate site. A Mg(2+)-binding site is contributed by Asn282.

Belongs to the pyruvate kinase family. In terms of assembly, homotetramer. Mg(2+) serves as cofactor. The cofactor is K(+).

It localises to the cytoplasm. The protein localises to the cytosol. The catalysed reaction is pyruvate + ATP = phosphoenolpyruvate + ADP + H(+). The protein operates within carbohydrate degradation; glycolysis; pyruvate from D-glyceraldehyde 3-phosphate: step 5/5. Its function is as follows. Key regulatory enzyme of the glycolytic pathway that catalyzes the final step of glycolysis, converting ADP and phosphoenolpyruvate (PEP) to ATP and pyruvate by essentially irreversible transphosphorylation. The polypeptide is Pyruvate kinase 2, cytosolic (Oryza sativa subsp. indica (Rice)).